A 147-amino-acid polypeptide reads, in one-letter code: Small ribosomal subunit protein uS13 (147 aa).

A disordered region spans residues serine 115 to serine 147. The segment covering threonine 132–serine 147 has biased composition (polar residues).

This sequence belongs to the universal ribosomal protein uS13 family. As to quaternary structure, part of the 30S ribosomal subunit. Forms a loose heterodimer with protein S19. Forms two bridges to the 50S subunit in the 70S ribosome.

In terms of biological role, located at the top of the head of the 30S subunit, it contacts several helices of the 16S rRNA. In the 70S ribosome it contacts the 23S rRNA (bridge B1a) and protein L5 of the 50S subunit (bridge B1b), connecting the 2 subunits; these bridges are implicated in subunit movement. In Methanobrevibacter smithii (strain ATCC 35061 / DSM 861 / OCM 144 / PS), this protein is Small ribosomal subunit protein uS13.